We begin with the raw amino-acid sequence, 954 residues long: Bifunctional endo-1,4-beta-xylanase XylA (954 aa).

A signal peptide (or 28, or 29) is located at residues 1–27; that stretch reads MKLSKIKKVLSGTVSALMIASAAPVVA. In terms of domain architecture, GH11 spans 29-236; that stretch reads AADQQTRGNV…SNGSANVKSV (208 aa). Glu122 acts as the Nucleophile in catalysis. The active-site Proton donor is Glu223. Polar residues predominate over residues 233-243; the sequence is VKSVSVTQGGS. The segment at 233–628 is disordered; the sequence is VKSVSVTQGG…NNNNSAGSSD (396 aa). Low complexity predominate over residues 246-622; that stretch reads NGGQQQNNDW…WNQGQQNNNN (377 aa). The GH10 domain occupies 624 to 952; it reads AGSSDSLKGA…KPAYDRVMAL (329 aa). Glu774 acts as the Proton donor in catalysis. Glu884 (nucleophile) is an active-site residue.

In the N-terminal section; belongs to the glycosyl hydrolase 11 (cellulase G) family. It in the C-terminal section; belongs to the glycosyl hydrolase 10 (cellulase F) family.

The catalysed reaction is Endohydrolysis of (1-&gt;4)-beta-D-xylosidic linkages in xylans.. It participates in glycan degradation; xylan degradation. Its function is as follows. Xylanase domain releases more xylo-oligosaccharides and GH10 domain more xylose. The sequence is that of Bifunctional endo-1,4-beta-xylanase XylA (xynA) from Ruminococcus flavefaciens.